Reading from the N-terminus, the 67-residue chain is DNA-directed RNA polymerase subunit omega (67 aa).

This sequence belongs to the RNA polymerase subunit omega family. In terms of assembly, the RNAP catalytic core consists of 2 alpha, 1 beta, 1 beta' and 1 omega subunit. When a sigma factor is associated with the core the holoenzyme is formed, which can initiate transcription.

The catalysed reaction is RNA(n) + a ribonucleoside 5'-triphosphate = RNA(n+1) + diphosphate. Functionally, promotes RNA polymerase assembly. Latches the N- and C-terminal regions of the beta' subunit thereby facilitating its interaction with the beta and alpha subunits. The sequence is that of DNA-directed RNA polymerase subunit omega (rpoZ) from Treponema pallidum (strain Nichols).